Reading from the N-terminus, the 164-residue chain is Transcription factor MafF (164 aa).

The tract at residues 51 to 76 (RLKQRRRTLKNRGYAASCRVKRVCQK) is basic motif. One can recognise a bZIP domain in the interval 51 to 114 (RLKQRRRTLK…DALRGKCEAL (64 aa)). Residues 79-93 (LQKQKSELEREVDKL) are leucine-zipper. Residues 141–164 (KSTPGSGSGPAHGPDPAHGPASCS) form a disordered region. Residues 149-164 (GPAHGPDPAHGPASCS) show a composition bias toward low complexity.

This sequence belongs to the bZIP family. Maf subfamily. As to quaternary structure, monomer and homo- or heterodimer. Interacts with MIP. Forms high affinity heterodimers with members of the CNC-bZIP family such as NFE2L1/NRF1. As to expression, expressed in the term myometrium and kidney.

The protein localises to the nucleus. Its function is as follows. Since they lack a putative transactivation domain, the small Mafs behave as transcriptional repressors when they dimerize among themselves. However, they seem to serve as transcriptional activators by dimerizing with other (usually larger) basic-zipper proteins, such as NFE2L1/NRF1, and recruiting them to specific DNA-binding sites. Interacts with the upstream promoter region of the oxytocin receptor gene. May be a transcriptional enhancer in the up-regulation of the oxytocin receptor gene at parturition. The polypeptide is Transcription factor MafF (MAFF) (Homo sapiens (Human)).